The sequence spans 335 residues: GTPase Obg (335 aa).

One can recognise an Obg domain in the interval 1–158 (MFVDQITLEL…RLVELELKLI (158 aa)). The OBG-type G domain maps to 159–334 (ADIGLVGFPN…LYDLFKSKLS (176 aa)). Residues 165–172 (GFPNAGKS), 190–194 (FTTLH), 215–218 (DIPG), 285–288 (NKID), and 315–317 (SGL) contribute to the GTP site. Mg(2+) contacts are provided by serine 172 and threonine 192.

The protein belongs to the TRAFAC class OBG-HflX-like GTPase superfamily. OBG GTPase family. In terms of assembly, monomer. Requires Mg(2+) as cofactor.

The protein localises to the cytoplasm. In terms of biological role, an essential GTPase which binds GTP, GDP and possibly (p)ppGpp with moderate affinity, with high nucleotide exchange rates and a fairly low GTP hydrolysis rate. Plays a role in control of the cell cycle, stress response, ribosome biogenesis and in those bacteria that undergo differentiation, in morphogenesis control. This chain is GTPase Obg, found in Chlamydia trachomatis serovar L2 (strain ATCC VR-902B / DSM 19102 / 434/Bu).